The following is a 68-amino-acid chain: Metallothionein (68 aa).

Residues Cys-7, Cys-9, Cys-14, Cys-16, Cys-20, Cys-22, Cys-25, Cys-27, Cys-35, Cys-39, Cys-40, Cys-42, Cys-43, Cys-47, Cys-50, Cys-54, Cys-56, Cys-64, Cys-66, and Cys-67 each contribute to the a divalent metal cation site.

The protein belongs to the metallothionein superfamily. Type 1 family.

Its function is as follows. Metallothioneins have a high content of cysteine residues that bind various heavy metals. The chain is Metallothionein (mt) from Scyliorhinus torazame (Cloudy catshark).